Consider the following 387-residue polypeptide: O-methyltransferase fsr2 (387 aa).

An S-adenosyl-L-methionine-binding site is contributed by aspartate 231. Histidine 280 serves as the catalytic Proton acceptor.

This sequence belongs to the class I-like SAM-binding methyltransferase superfamily. Cation-independent O-methyltransferase family. COMT subfamily.

The protein operates within polyketide biosynthesis. O-methyltransferase; part of the gene cluster that mediates the biosynthesis of fusarubins, highly pigmented naphthoquinones responsible for the coloration of the fruiting bodies. The non-reducing polyketide synthase FSR1 is responsible for the condensation of seven acetyl-CoA units to yield a haptaketide. After rings A and B are formed by aldol-type cyclization, the PKS-derived product is released as 6-O-demethylfusarubinaldehyde. Then, two hydroxyl groups at C-5 and C-10 are incorporated by FSR3, and simultaneously hydroxyl groups at C-6 and C-8 are methylated by FSR2. The aldehyde is, on the one hand, reduced by FSR3 to 8-O-methylfusarubin alcohol, which equilibrates mainly with 8-O-methylfusarubin and only small amounts of 8-O-methylnectriafurone. On the other hand, the aldehyde can be oxidized to form 8-O-methylfusarubinic acid, a reaction driven by FSR3 equilibrating with 8-O-methylfusarubinlactone, finally resulting in 8-O-methylanhydrofusarubinlactol after a further reduction step and loss of water. 8-O-Methylfusarubinic acid can also undergo decarboxylation, resulting in 8-O-methyl-13-hydroxynorjavanicin after another hydroxylation step at C-13. Both steps are most likely also accomplished by FSR3. No enzymatic function has been determined so far for either FSR4 and FSR5. Their deletion does not alter the product spectrum, but the possibility that they catalyze specific enzymatic steps during perithecium development cannot be ruled out. FSR4 might possess a regulatory function in the biosynthesis of fusarubins. The sequence is that of O-methyltransferase fsr2 from Gibberella fujikuroi (strain CBS 195.34 / IMI 58289 / NRRL A-6831) (Bakanae and foot rot disease fungus).